The primary structure comprises 479 residues: Poly(A) polymerase catalytic subunit (479 aa).

Residues aspartate 202 and aspartate 204 contribute to the active site. Ca(2+) is bound by residues aspartate 202, aspartate 204, and aspartate 253.

It belongs to the poxviridae poly(A) polymerase catalytic subunit family. Heterodimer of a large (catalytic) subunit and a small (regulatory) subunit.

The enzyme catalyses RNA(n) + ATP = RNA(n)-3'-adenine ribonucleotide + diphosphate. Its function is as follows. Polymerase that creates the 3'-poly(A) tail of mRNA's. In Cowpox virus (strain GRI-90 / Grishak) (CPV), this protein is Poly(A) polymerase catalytic subunit (OPG063).